Consider the following 460-residue polypeptide: Probable lipid II flippase MurJ (460 aa).

11 consecutive transmembrane segments (helical) span residues 4-24 (ILGA…PNLF), 50-70 (FASL…LLVA), 95-115 (IVAI…LGAL), 122-142 (FFAS…ALLI), 155-175 (LSYG…YPLV), 228-248 (IASF…VSYL), 257-277 (LPLA…IAIA), 292-312 (KAWF…IMLS), 336-356 (VFSL…FSLW), 366-386 (AAKI…SLMP), and 428-448 (LVIL…KSWV).

Belongs to the MurJ/MviN family.

It is found in the cell inner membrane. It participates in cell wall biogenesis; peptidoglycan biosynthesis. Involved in peptidoglycan biosynthesis. Transports lipid-linked peptidoglycan precursors from the inner to the outer leaflet of the cytoplasmic membrane. The protein is Probable lipid II flippase MurJ of Helicobacter pylori (strain J99 / ATCC 700824) (Campylobacter pylori J99).